A 183-amino-acid chain; its full sequence is Isopentenyl-diphosphate Delta-isomerase (183 aa).

Residues His26 and His33 each contribute to the Mn(2+) site. The Nudix hydrolase domain occupies 31-169; the sequence is PLHFAFSCYV…PFAFSPWMVE (139 aa). Cys68 is an active-site residue. Cys68 is a Mg(2+) binding site. Residue His70 participates in Mn(2+) binding. Residue Glu88 participates in Mg(2+) binding. Residues Glu118 and Glu120 each coordinate Mn(2+). Glu120 is an active-site residue.

The protein belongs to the IPP isomerase type 1 family. Mg(2+) serves as cofactor. It depends on Mn(2+) as a cofactor.

The protein localises to the cytoplasm. The catalysed reaction is isopentenyl diphosphate = dimethylallyl diphosphate. Its pathway is isoprenoid biosynthesis; dimethylallyl diphosphate biosynthesis; dimethylallyl diphosphate from isopentenyl diphosphate: step 1/1. Functionally, catalyzes the 1,3-allylic rearrangement of the homoallylic substrate isopentenyl (IPP) to its highly electrophilic allylic isomer, dimethylallyl diphosphate (DMAPP). In Corynebacterium diphtheriae (strain ATCC 700971 / NCTC 13129 / Biotype gravis), this protein is Isopentenyl-diphosphate Delta-isomerase.